The sequence spans 535 residues: Dimethylaniline monooxygenase [N-oxide-forming] 2 (535 aa).

An N-acetylalanine modification is found at Ala2. FAD is bound by residues 9-13 (GAGVS), Glu32, 40-41 (VW), and 61-62 (NT). NADP(+)-binding positions include 60 to 61 (TN) and 195 to 198 (SGSD). Lys492 participates in a covalent cross-link: Glycyl lysine isopeptide (Lys-Gly) (interchain with G-Cter in SUMO). Residues 510-530 (FSVSFLLKILGLLAVVVAFFC) traverse the membrane as a helical segment.

Belongs to the FMO family. FAD serves as cofactor. The cofactor is Mg(2+).

Its subcellular location is the microsome membrane. It is found in the endoplasmic reticulum membrane. In terms of biological role, catalyzes the oxidative metabolism of numerous xenobiotics, including mainly therapeutic drugs and insecticides that contain a soft nucleophile, most commonly nitrogen and sulfur and participates to their bioactivation. The protein is Dimethylaniline monooxygenase [N-oxide-forming] 2 of Pan troglodytes (Chimpanzee).